A 105-amino-acid polypeptide reads, in one-letter code: Dicamba O-demethylase, ferredoxin component (105 aa).

Residues 2–105 (PQITVVNQSG…GIKVTIAQED (104 aa)) form the 2Fe-2S ferredoxin-type domain. Positions 40, 46, 49, and 86 each coordinate [2Fe-2S] cluster.

It belongs to the adrenodoxin/putidaredoxin family. As to quaternary structure, monomer. The dicamba O-demethylase multicomponent enzyme system is composed of an oxygenase component (DdmC) and an electron transfer component formed by a ferredoxin reductase (DdmA1) and a ferredoxin (DdmB). In vitro, dicamba O-demethylase assays in which DdmA2 is substituted for DdmA1 demonstrate that the two enzymes possess nearly identical activities. The cofactor is [2Fe-2S] cluster.

Component of the dicamba O-demethylase multicomponent enzyme system involved in the degradation of the herbicide dicamba. In vitro, functions as an intermediate electron transfer protein. The polypeptide is Dicamba O-demethylase, ferredoxin component (Stenotrophomonas maltophilia (Pseudomonas maltophilia)).